The primary structure comprises 36 residues: Cytochrome b6-f complex subunit 7 (36 aa).

Residues 1-5 (NAAAE) are Lumenal-facing. Residues 6–28 (IFRIAAVMNGLTLVGVAIGFVLL) traverse the membrane as a helical segment. Over 29 to 36 (RIEATVEE) the chain is Stromal.

It belongs to the PetM family. The 4 large subunits of the cytochrome b6-f complex are cytochrome b6, subunit IV (17 kDa polypeptide, PetD), cytochrome f and the Rieske protein, while the 4 small subunits are PetG, PetL, PetM and PetN. The complex functions as a dimer.

It is found in the plastid. Its subcellular location is the chloroplast thylakoid membrane. Component of the cytochrome b6-f complex, which mediates electron transfer between photosystem II (PSII) and photosystem I (PSI), cyclic electron flow around PSI, and state transitions. In Spinacia oleracea (Spinach), this protein is Cytochrome b6-f complex subunit 7.